Here is a 1521-residue protein sequence, read N- to C-terminus: Retroelement silencing factor 1 (1521 aa).

Lys-223 participates in a covalent cross-link: Glycyl lysine isopeptide (Lys-Gly) (interchain with G-Cter in SUMO2). The tract at residues 621–640 (EKQHKPIQGDPDIADSSLGK) is disordered. A Phosphoserine modification is found at Ser-910. Thr-996 bears the Phosphothreonine mark. 2 stretches are compositionally biased toward polar residues: residues 1093–1105 (KNMP…SQES) and 1124–1142 (LSSN…QSVS). Disordered regions lie at residues 1093-1147 (KNMP…EKKK), 1204-1230 (ERAS…KSTR), and 1312-1335 (EASR…PDKM). Ser-1142 carries the post-translational modification Phosphoserine. The segment covering 1214-1228 (PSPESSDPKGSSSKS) has biased composition (low complexity). Residues 1325-1335 (GKFDGKQPDKM) show a composition bias toward basic and acidic residues. Lys-1411 is covalently cross-linked (Glycyl lysine isopeptide (Lys-Gly) (interchain with G-Cter in SUMO2)). Disordered regions lie at residues 1425-1444 (DKQD…VQVS) and 1457-1485 (IPTR…SADE). The span at 1467–1476 (SQRDSADSRL) shows a compositional bias: basic and acidic residues. A phosphoserine mark is found at Ser-1482 and Ser-1514.

In terms of assembly, interacts with SETDB1.

It is found in the nucleus. In terms of biological role, plays a role in the regulation of imprinted gene expression, regulates repressive epigenetic modifications associated with SETDB1. Required for the recruitment or accumulation of SETDB1 to the endogenous retroviruses (ERVs) and maintenance of repressive chromatin configuration, contributing to a subset of the SETDB1-dependent ERV silencing in embryonic stem cells. This is Retroelement silencing factor 1 from Mus musculus (Mouse).